The following is a 348-amino-acid chain: Fe(3+) ions import ATP-binding protein FbpC (348 aa).

Residues 7 to 237 (VELRNVTKRF…PASRFMASFM (231 aa)) form the ABC transporter domain. Residue 39–46 (GPSGCGKT) coordinates ATP.

Belongs to the ABC transporter superfamily. Fe(3+) ion importer (TC 3.A.1.10) family. The complex is composed of two ATP-binding proteins (FbpC), two transmembrane proteins (FbpB) and a solute-binding protein (FbpA).

The protein localises to the cell inner membrane. The catalysed reaction is Fe(3+)(out) + ATP + H2O = Fe(3+)(in) + ADP + phosphate + H(+). Functionally, part of the ABC transporter complex FbpABC involved in Fe(3+) ions import. Responsible for energy coupling to the transport system. This chain is Fe(3+) ions import ATP-binding protein FbpC, found in Escherichia coli (strain K12).